Consider the following 536-residue polypeptide: MAYELSTLQLSCVAFVAFMAVLVFRTRTRNLKQNVPPGPRPLPIIGNFFDLPPKGQPEYLHWFKHKDAYGPVSSINVMGTTLVIFHDKDAAHAVMGKKAQKTSARPQLNFAQLCGFENFLITHQYNDKYRLHRKMVHQEIGTKGLSAGFRPIQEQESIRFILQTFNRPDDILQHLKTLAAAIVLKITYGYSIERKGQDPLVELIEHAMENLSQAFVPLAWAVDSVPAIKYLPDWFPGMSYRKTARKWRAINEAAAELPYDFVKRQMAHKAHQPSYVSNLLEKHMIKSEDNKINVSAADEEAIKWTAVSLYAAGSDSTVAIIHSVICGLVMFPEVVTRAQEEIDRVVGSDRLPNFDDRTNLPYVDGIIKEAWRWNPVGPMGLTHKSEEDLVCGEYLIPKGSYLLPSLWWFLNDPKEYPEPRVFKPERYMEPFNHPDPSEIAFGYGRRSCAGRYFADASVYITVVQLLAVFNVRKARDDQGNEIPVTLQAIPGMVNRPAPFQFKVEPRSQHHIDLLRRIESEQIPEVSHASLLKPSTV.

The helical transmembrane segment at 4-24 (ELSTLQLSCVAFVAFMAVLVF) threads the bilayer. N-linked (GlcNAc...) asparagine glycosylation is found at asparagine 210 and asparagine 293. Cysteine 448 serves as a coordination point for heme.

Belongs to the cytochrome P450 family. It depends on heme as a cofactor.

It localises to the membrane. It catalyses the reaction (+)-exo-beta-bergamotene + 2 reduced [NADPH--hemoprotein reductase] + 3 O2 = 5-dehydro-6-demethoxyfumagillol + 2 oxidized [NADPH--hemoprotein reductase] + 3 H2O + 2 H(+). The protein operates within secondary metabolite biosynthesis; terpenoid biosynthesis. In terms of biological role, multifunctional cytochrome P450 monooxygenase; part of the gene cluster that mediates the biosynthesis of fumagillin, a meroterpenoid that has numerous biological activities including irreversible inhibition of human type 2 methionine aminopeptidase (METAP2). Within the pathway, the multifunctional cytochrome P450 monooxygenase af510 acts as a 2,4,6-trichlorophenol monooxygenase that first performs the C-H hydroxylation at the bridgehead C5 position to yield 5R-hydroxyl-beta-trans-bergamotene. Subsequently, a four electron oxidation initiated at C-9 coupled to cleavage of the cyclobutane C5-C8 bond of the bicyclo[3.1.1] core yields the epoxyketone intermediate 5-keto-cordycol. An additional epoxidation reaction also catalyzed by af510 then furnishes the characteristic bisepoxide ketone 5-keto-demethoxyfumagillol. The pathway begins with the conversion of farnesyl pyrophosphate (FPP) to beta-trans-bergamotene by the membrane-bound beta-trans-bergamotene synthase af520. The multifunctional cytochrome P450 monooxygenase af510 then converts beta-trans-bergamotene into 5-keto-demethoxyfumagillol via several oxydation steps. 5-keto-demethoxyfumagillol is then subjected to successive C-6 hydroxylation and O-methylation by the dioxygenase af480 and O-methyltransferase af390-400, respectively, to yield 5-keto-fumagillol, which is then stereoselectively reduced by the keto-reductase af490 to 5R-hydroxy-seco-sesquiterpene. The next step is the polyketide transferase af380-catalyzed transfer of a dodecapentaenoyl group synthesized by the polyketide synthase af370 onto 5R-hydroxy-seco-sesquiterpene which leads to the production of prefumagillin. Finally, oxidative cleavage by the monooxygenase af470 converts prefumagillin to fumagillin. The polypeptide is Multifunctional cytochrome P450 monooxygenase af510 (Aspergillus fumigatus (strain ATCC MYA-4609 / CBS 101355 / FGSC A1100 / Af293) (Neosartorya fumigata)).